Consider the following 218-residue polypeptide: MRRVFLSHEPYVIEYHEDWENIITRLVDMYNEVAEWILKDDTSPTPDKFFKQLSVSLKDKRVCVCGIDPYPRDATGVPFESHNFTKKTIKYIAETVSNITGVRYYKGYNLNNVEGVFPWNYYLSCKIGETKSHALHWKRISKLLLQHITKYVNVLYCLGKTDFANIRSILETPVTTVIGYHPAAREKQFEKDKGFEIVNVLLEINDKPSIRWEQGFSY.

Catalysis depends on Asp-68, which acts as the Proton acceptor.

The protein belongs to the uracil-DNA glycosylase (UDG) superfamily. UNG family. In terms of assembly, homodimer. Interacts with protein A20. Component of the Uracil-DNA glycosylase(UDG)-A20-polymerase complex; A20 and UDG form a heterodimeric processivity factor that associates with E9 to form the processive polymerase holoenzyme.

The catalysed reaction is Hydrolyzes single-stranded DNA or mismatched double-stranded DNA and polynucleotides, releasing free uracil.. In terms of biological role, excises uracil residues from the DNA which can arise as a result of misincorporation of dUMP residues by DNA polymerase or due to deamination of cytosine. Also part of a heterodimeric processivity factor which potentiates the DNA polymerase activity. Binds to DNA. The protein is Uracil-DNA glycosylase (UNG) of Oryctolagus cuniculus (Rabbit).